The sequence spans 367 residues: Aurora kinase (367 aa).

The segment at 30-49 is disordered; sequence TTATNGAPPQARVQPGKGYR. Positions 109-360 constitute a Protein kinase domain; the sequence is FEIGKVLGKG…LKEVKKHPWI (252 aa). Residues 115-123 and lysine 138 contribute to the ATP site; that span reads LGKGKFGRV. Aspartate 232 (proton acceptor) is an active-site residue.

Belongs to the protein kinase superfamily. Ser/Thr protein kinase family. Aurora subfamily.

The protein localises to the nucleus. It is found in the cytoplasm. Its subcellular location is the cytoskeleton. It localises to the spindle. The protein resides in the chromosome. The protein localises to the centromere. It is found in the kinetochore. It carries out the reaction L-seryl-[protein] + ATP = O-phospho-L-seryl-[protein] + ADP + H(+). The enzyme catalyses L-threonyl-[protein] + ATP = O-phospho-L-threonyl-[protein] + ADP + H(+). In terms of biological role, component of the chromosomal passenger complex (CPC), a complex that acts as a key regulator of chromosome segregation and cytokinesis. Has a role in error-correction of aberrent kinetochore-microtubule attachments to ensure that sister kinetochores become bioriented and connect to opposite poles by promoting spindle assembly checkpoint signaling. The protein is Aurora kinase (IPL1) of Eremothecium gossypii (strain ATCC 10895 / CBS 109.51 / FGSC 9923 / NRRL Y-1056) (Yeast).